The chain runs to 178 residues: Orotate phosphoribosyltransferase (178 aa).

Residues Arg92, Lys93, Lys96, and 118–126 (EDVITTGSS) contribute to the 5-phospho-alpha-D-ribose 1-diphosphate site. Orotate-binding residues include Thr122 and Arg150.

The protein belongs to the purine/pyrimidine phosphoribosyltransferase family. PyrE subfamily. Homodimer. Mg(2+) is required as a cofactor.

The enzyme catalyses orotidine 5'-phosphate + diphosphate = orotate + 5-phospho-alpha-D-ribose 1-diphosphate. Its pathway is pyrimidine metabolism; UMP biosynthesis via de novo pathway; UMP from orotate: step 1/2. Its function is as follows. Catalyzes the transfer of a ribosyl phosphate group from 5-phosphoribose 1-diphosphate to orotate, leading to the formation of orotidine monophosphate (OMP). The polypeptide is Orotate phosphoribosyltransferase (Archaeoglobus fulgidus (strain ATCC 49558 / DSM 4304 / JCM 9628 / NBRC 100126 / VC-16)).